A 333-amino-acid polypeptide reads, in one-letter code: Ornithine carbamoyltransferase (333 aa).

Carbamoyl phosphate contacts are provided by residues 56-59, Gln-83, Arg-107, and 134-137; these read STRT and HPTQ. Residues Asn-167, Asp-231, and 235-236 each bind L-ornithine; that span reads SM. Carbamoyl phosphate is bound by residues 273–274 and Arg-318; that span reads CL.

This sequence belongs to the aspartate/ornithine carbamoyltransferase superfamily. OTCase family.

The protein resides in the cytoplasm. It carries out the reaction carbamoyl phosphate + L-ornithine = L-citrulline + phosphate + H(+). The protein operates within amino-acid biosynthesis; L-arginine biosynthesis; L-arginine from L-ornithine and carbamoyl phosphate: step 1/3. Its function is as follows. Reversibly catalyzes the transfer of the carbamoyl group from carbamoyl phosphate (CP) to the N(epsilon) atom of ornithine (ORN) to produce L-citrulline. The protein is Ornithine carbamoyltransferase (argF) of Staphylococcus aureus (strain COL).